The following is a 114-amino-acid chain: Ghrelin (114 aa).

Residues Met1–Ala24 form the signal peptide. Thr27 is lipidated: O-decanoyl threonine; alternate. The O-octanoyl threonine; alternate moiety is linked to residue Thr27. Residues Gly55–Gln114 constitute a propeptide, removed in mature form.

The protein belongs to the motilin family. Post-translationally, O-octanoylated by GOAT/MBOAT4. O-octanoylation or O-decanoylation is essential for activity. The O-decanoylated form ghrelin-27-C10 differs in the length of the carbon backbone of the carboxylic acid bound to Thr-27. 33% of frog ghrelin is O-decanoylated. In terms of processing, 80% of frog ghrelin has Asn-52 cleaved from its C-terminus giving rise to ghrelin-27. High levels in stomach. Moderate levels in small intestine, pancreas and testis. Low levels in heart, lung and gall bladder.

The protein localises to the secreted. In terms of biological role, ligand for growth hormone secretagogue receptor type 1 (GHSR). Induces the release of growth hormone from the pituitary. Has an appetite-stimulating effect, induces adiposity and stimulates gastric acid secretion. Involved in growth regulation. This Aquarana catesbeiana (American bullfrog) protein is Ghrelin (GHRL).